The following is a 357-amino-acid chain: Anthranilate phosphoribosyltransferase (357 aa).

5-phospho-alpha-D-ribose 1-diphosphate contacts are provided by residues Gly-91, 94 to 95 (GD), Thr-99, 101 to 104 (NIST), 119 to 127 (KHGNRSVSS), and Ser-131. Residue Gly-91 coordinates anthranilate. Ser-103 serves as a coordination point for Mg(2+). Position 122 (Asn-122) interacts with anthranilate. Arg-177 provides a ligand contact to anthranilate. Mg(2+) is bound by residues Asp-235 and Glu-236.

This sequence belongs to the anthranilate phosphoribosyltransferase family. Homodimer. It depends on Mg(2+) as a cofactor.

The enzyme catalyses N-(5-phospho-beta-D-ribosyl)anthranilate + diphosphate = 5-phospho-alpha-D-ribose 1-diphosphate + anthranilate. It participates in amino-acid biosynthesis; L-tryptophan biosynthesis; L-tryptophan from chorismate: step 2/5. Catalyzes the transfer of the phosphoribosyl group of 5-phosphorylribose-1-pyrophosphate (PRPP) to anthranilate to yield N-(5'-phosphoribosyl)-anthranilate (PRA). The polypeptide is Anthranilate phosphoribosyltransferase (Shewanella baltica (strain OS195)).